A 319-amino-acid polypeptide reads, in one-letter code: Phospho-N-acetylmuramoyl-pentapeptide-transferase (319 aa).

A run of 10 helical transmembrane segments spans residues 5 to 25, 51 to 71, 79 to 99, 116 to 136, 149 to 169, 172 to 192, 197 to 217, 224 to 244, 252 to 272, and 299 to 319; these read LIPFISSFALTVIFLPLFIGF, TMGGVVFMLASVISTLWVLIW, TWILIIAFLGYGIIGFLDDGI, LGQIIIAALIIALAFSDHFAF, SFLFSLFVLFWLVGFSNAVNL, GLDGLATGLSIIAYATYAWIA, NWVIVAFTLSVIGGLVGFFIF, IFMGDAGSLALGGGLATVSIF, LLIGIVFVLETLSVILQVISF, and VDIVFWIVGLIGSIIYLIIWG.

It belongs to the glycosyltransferase 4 family. MraY subfamily. The cofactor is Mg(2+).

The protein resides in the cell membrane. It catalyses the reaction UDP-N-acetyl-alpha-D-muramoyl-L-alanyl-gamma-D-glutamyl-L-lysyl-D-alanyl-D-alanine + di-trans,octa-cis-undecaprenyl phosphate = Mur2Ac(oyl-L-Ala-gamma-D-Glu-L-Lys-D-Ala-D-Ala)-di-trans,octa-cis-undecaprenyl diphosphate + UMP. The protein operates within cell wall biogenesis; peptidoglycan biosynthesis. Functionally, catalyzes the initial step of the lipid cycle reactions in the biosynthesis of the cell wall peptidoglycan: transfers peptidoglycan precursor phospho-MurNAc-pentapeptide from UDP-MurNAc-pentapeptide onto the lipid carrier undecaprenyl phosphate, yielding undecaprenyl-pyrophosphoryl-MurNAc-pentapeptide, known as lipid I. The sequence is that of Phospho-N-acetylmuramoyl-pentapeptide-transferase from Lactobacillus gasseri (strain ATCC 33323 / DSM 20243 / BCRC 14619 / CIP 102991 / JCM 1131 / KCTC 3163 / NCIMB 11718 / NCTC 13722 / AM63).